Reading from the N-terminus, the 198-residue chain is Photosystem I assembly protein Ycf4 (198 aa).

Transmembrane regions (helical) follow at residues 35–57 and 70–92; these read WFYN…SSYI and IIFF…FSIN.

The protein belongs to the Ycf4 family.

The protein localises to the plastid. The protein resides in the chloroplast thylakoid membrane. Seems to be required for the assembly of the photosystem I complex. The chain is Photosystem I assembly protein Ycf4 from Euglena gracilis.